Reading from the N-terminus, the 177-residue chain is Calcium-binding protein CML38 (177 aa).

Polar residues predominate over residues 1–11 (MKNNTQPQSSF). Residues 1 to 44 (MKNNTQPQSSFKKLCRKLSPKREDSAGEIQQHNSSNGEDKNREL) are disordered. EF-hand domains lie at 39 to 74 (DKNR…LGEQ), 75 to 110 (LSDE…DDEE), 111 to 146 (EKKM…LGES), and 147 to 177 (RTTD…LMMR). Ca(2+)-binding residues include D52, N54, D56, R58, E63, D88, D90, D92, M94, and E99. 4 residues coordinate Ca(2+): D160, N162, D164, and E171.

Binds to ABCG36. As to expression, expressed in cotyledons and guard cells of young leaves. In mature root, expressed in the epidermis, trichoblasts, young lateral root and root tip. Expressed from stage 9 to 15 of flower development in anther wall.

In terms of biological role, potential calcium sensor that binds calcium in vitro. The polypeptide is Calcium-binding protein CML38 (Arabidopsis thaliana (Mouse-ear cress)).